The primary structure comprises 143 residues: NADH-quinone oxidoreductase subunit A (143 aa).

The next 3 helical transmembrane spans lie at 8–28 (FGNV…GYLT), 63–83 (FYVV…LYPW), and 93–113 (FALI…AYAW).

Belongs to the complex I subunit 3 family. As to quaternary structure, NDH-1 is composed of 14 different subunits. Subunits NuoA, H, J, K, L, M, N constitute the membrane sector of the complex.

It is found in the cell inner membrane. It catalyses the reaction a quinone + NADH + 5 H(+)(in) = a quinol + NAD(+) + 4 H(+)(out). Functionally, NDH-1 shuttles electrons from NADH, via FMN and iron-sulfur (Fe-S) centers, to quinones in the respiratory chain. The immediate electron acceptor for the enzyme in this species is believed to be a menaquinone. Couples the redox reaction to proton translocation (for every two electrons transferred, four hydrogen ions are translocated across the cytoplasmic membrane), and thus conserves the redox energy in a proton gradient. The sequence is that of NADH-quinone oxidoreductase subunit A from Pelodictyon phaeoclathratiforme (strain DSM 5477 / BU-1).